The primary structure comprises 197 residues: Putative manganese efflux pump MntP (197 aa).

6 helical membrane passes run 8 to 28 (VILL…GLGA), 43 to 63 (VYAA…GYLL), 66 to 86 (VLLG…LIVL), 123 to 143 (LAIA…LLAL), 146 to 166 (WLAC…GIYL), and 177 to 197 (KAEI…MLFS).

Belongs to the MntP (TC 9.B.29) family.

The protein resides in the cell inner membrane. Probably functions as a manganese efflux pump. This chain is Putative manganese efflux pump MntP, found in Psychrobacter arcticus (strain DSM 17307 / VKM B-2377 / 273-4).